Reading from the N-terminus, the 114-residue chain is Large ribosomal subunit protein bL19 (114 aa).

It belongs to the bacterial ribosomal protein bL19 family.

Its function is as follows. This protein is located at the 30S-50S ribosomal subunit interface and may play a role in the structure and function of the aminoacyl-tRNA binding site. The sequence is that of Large ribosomal subunit protein bL19 from Listeria welshimeri serovar 6b (strain ATCC 35897 / DSM 20650 / CCUG 15529 / CIP 8149 / NCTC 11857 / SLCC 5334 / V8).